A 145-amino-acid chain; its full sequence is [Ribosomal protein bS18]-alanine N-acetyltransferase (145 aa).

One can recognise an N-acetyltransferase domain in the interval 1 to 145; that stretch reads MIETIVEQDF…ENAVIMALYL (145 aa). 67–69 contributes to the acetyl-CoA binding site; it reads LAV. Glu-101 (proton acceptor) is an active-site residue. Asn-106 lines the acetyl-CoA pocket. Catalysis depends on Tyr-113, which acts as the Proton donor.

It belongs to the acetyltransferase family. RimI subfamily.

The protein resides in the cytoplasm. The enzyme catalyses N-terminal L-alanyl-[ribosomal protein bS18] + acetyl-CoA = N-terminal N(alpha)-acetyl-L-alanyl-[ribosomal protein bS18] + CoA + H(+). Its function is as follows. Acetylates the N-terminal alanine of ribosomal protein bS18. The protein is [Ribosomal protein bS18]-alanine N-acetyltransferase of Haemophilus ducreyi (strain 35000HP / ATCC 700724).